Reading from the N-terminus, the 259-residue chain is ATP synthase subunit a (259 aa).

The next 5 membrane-spanning stretches (helical) occupy residues 29-49 (TVNI…IWLF), 89-109 (LIAP…AMDL), 132-154 (SADV…FYSI), 209-229 (IFIL…NVPW), and 230-250 (AIFH…LTIV).

Belongs to the ATPase A chain family. As to quaternary structure, F-type ATPases have 2 components, CF(1) - the catalytic core - and CF(0) - the membrane proton channel. CF(1) has five subunits: alpha(3), beta(3), gamma(1), delta(1), epsilon(1). CF(0) has three main subunits: a(1), b(2) and c(9-12). The alpha and beta chains form an alternating ring which encloses part of the gamma chain. CF(1) is attached to CF(0) by a central stalk formed by the gamma and epsilon chains, while a peripheral stalk is formed by the delta and b chains.

It is found in the cell inner membrane. Its function is as follows. Key component of the proton channel; it plays a direct role in the translocation of protons across the membrane. In Tolumonas auensis (strain DSM 9187 / NBRC 110442 / TA 4), this protein is ATP synthase subunit a.